The sequence spans 318 residues: Aldo-keto reductase family 1 member C21 (318 aa).

20 to 24 serves as a coordination point for NADP(+); sequence GFGTA. Substrate is bound at residue Lys31. Residue Asp50 participates in NADP(+) binding. The Proton donor role is filled by Tyr55. Residue His117 coordinates substrate. Residues 166 to 167, Gln190, 216 to 224, and 270 to 280 contribute to the NADP(+) site; these read SN, YGVLGTQRY, and TSLKEERIKEN.

This sequence belongs to the aldo/keto reductase family. As to quaternary structure, monomer.

The protein localises to the cytoplasm. The catalysed reaction is androsterone + NADP(+) = 5alpha-androstan-3,17-dione + NADPH + H(+). It carries out the reaction androsterone + NAD(+) = 5alpha-androstan-3,17-dione + NADH + H(+). Its function is as follows. NADP-dependent 17-alpha-hydroxysteroid dehydrogenase that converts 5-alpha-androstane-3,17-dione into androsterone. Has lower 3-alpha-hydroxysteroid dehydrogenase activity. Has broad substrate specificity and acts on various 17-alpha-hydroxysteroids, 17-ketosteroids, 3-alpha hydroxysteroids and 3-ketosteroids. Reduction of keto groups is strictly stereoselective. Reduction of 17-ketosteroids yields only 17-alpha-hydroxysteroids. Likewise, reduction of 3-ketosteroids yields only 3-alpha-hydroxysteroids. The chain is Aldo-keto reductase family 1 member C21 (Akr1c21) from Rattus norvegicus (Rat).